Here is a 243-residue protein sequence, read N- to C-terminus: Type III pantothenate kinase (243 aa).

Position 7–14 (7–14 (DLGNSRFK)) interacts with ATP. Residues Y91 and 98–101 (GVDR) contribute to the substrate site. The active-site Proton acceptor is the D100. T122 lines the ATP pocket. T172 is a substrate binding site.

The protein belongs to the type III pantothenate kinase family. As to quaternary structure, homodimer. NH4(+) is required as a cofactor. Requires K(+) as cofactor.

Its subcellular location is the cytoplasm. The catalysed reaction is (R)-pantothenate + ATP = (R)-4'-phosphopantothenate + ADP + H(+). Its pathway is cofactor biosynthesis; coenzyme A biosynthesis; CoA from (R)-pantothenate: step 1/5. In terms of biological role, catalyzes the phosphorylation of pantothenate (Pan), the first step in CoA biosynthesis. The sequence is that of Type III pantothenate kinase from Stenotrophomonas maltophilia (strain K279a).